Here is a 989-residue protein sequence, read N- to C-terminus: Protease PrtH (989 aa).

Repeats lie at residues Thr270–Asn323 and Ser528–Asp581. The tract at residues Pro969–Arg989 is disordered.

Belongs to the peptidase C25 family.

The protein resides in the cytoplasmic vesicle. Functionally, cleaves human complement component C3. May enable P.gingivalis to evade complement-mediated killing during the immune response. Plays an important role in soft tissue infections and is a virulence factor. The protein is Protease PrtH (prtH) of Porphyromonas gingivalis (strain ATCC BAA-308 / W83).